A 240-amino-acid polypeptide reads, in one-letter code: Protein MGARP (240 aa).

Residues 1–40 (MYLRRAVSKTLALPLRAPPNPAPLGKDASLRRMSSNRFPG) are Cytoplasmic-facing. A helical; Anchor for type IV membrane protein membrane pass occupies residues 41–63 (SSGSNMIYYLVVGVTVSAGGYYA). Residues 64–240 (YKTVTSDQAK…VGSEAASAQG (177 aa)) are Mitochondrial intermembrane-facing. The disordered stretch occupies residues 166–240 (RETTEVNPET…VGSEAASAQG (75 aa)). The span at 170–181 (EVNPETTPEVTN) shows a compositional bias: low complexity. The span at 191 to 201 (DNDKDTTKNET) shows a compositional bias: basic and acidic residues. A compositionally biased stretch (acidic residues) spans 202–213 (SDEYAELEEENS). Over residues 228–240 (EASVGSEAASAQG) the composition is skewed to low complexity.

As to quaternary structure, interacts with RHOT1/Miro-1, TRAK1/OIP106 and TRAK2/GRIF1. Interacts with RHOT2/Miro-2. Expressed in the brain, adrenal gland and corneal endothelium (CE). Expressed in steroid-producing cells of the ovary and testis (at protein level). Expressed in steroid-producing cells of the ovary and testis. Weakly expressed in placenta. Expressed in corneal endothelial cells.

The protein localises to the mitochondrion. The protein resides in the mitochondrion outer membrane. It is found in the mitochondrion inner membrane. Its function is as follows. Plays a role in the trafficking of mitochondria along microtubules. Regulates the kinesin-mediated axonal transport of mitochondria to nerve terminals along microtubules during hypoxia. Participates in the translocation of TRAK2/GRIF1 from the cytoplasm to the mitochondrion. Also plays a role in steroidogenesis through maintenance of mitochondrial abundance and morphology. Plays an inhibitory role during neocortex development by regulating mitochondrial morphology, distribution and motility in neocortical neurons. The sequence is that of Protein MGARP (MGARP) from Homo sapiens (Human).